The sequence spans 285 residues: NAD kinase (285 aa).

Residue aspartate 66 is the Proton acceptor of the active site. Residues aspartate 66–glycine 67, asparagine 137–aspartate 138, arginine 148, arginine 165, aspartate 167, and threonine 178–serine 183 each bind NAD(+).

Belongs to the NAD kinase family. A divalent metal cation is required as a cofactor.

It is found in the cytoplasm. It carries out the reaction NAD(+) + ATP = ADP + NADP(+) + H(+). Involved in the regulation of the intracellular balance of NAD and NADP, and is a key enzyme in the biosynthesis of NADP. Catalyzes specifically the phosphorylation on 2'-hydroxyl of the adenosine moiety of NAD to yield NADP. This is NAD kinase from Chlorobium phaeobacteroides (strain DSM 266 / SMG 266 / 2430).